Reading from the N-terminus, the 303-residue chain is Ribosomal RNA small subunit methyltransferase A (303 aa).

Positions 1 to 19 (MSSRPPASFSATFSAARSS) are enriched in low complexity. Positions 1–34 (MSSRPPASFSATFSAARSSKCVPPPRRPSTDVSL) are disordered. 6 residues coordinate S-adenosyl-L-methionine: H55, L57, G82, E104, D130, and N149.

This sequence belongs to the class I-like SAM-binding methyltransferase superfamily. rRNA adenine N(6)-methyltransferase family. RsmA subfamily.

Its subcellular location is the cytoplasm. The catalysed reaction is adenosine(1518)/adenosine(1519) in 16S rRNA + 4 S-adenosyl-L-methionine = N(6)-dimethyladenosine(1518)/N(6)-dimethyladenosine(1519) in 16S rRNA + 4 S-adenosyl-L-homocysteine + 4 H(+). In terms of biological role, specifically dimethylates two adjacent adenosines (A1518 and A1519) in the loop of a conserved hairpin near the 3'-end of 16S rRNA in the 30S particle. May play a critical role in biogenesis of 30S subunits. This chain is Ribosomal RNA small subunit methyltransferase A, found in Gluconobacter oxydans (strain 621H) (Gluconobacter suboxydans).